Here is a 533-residue protein sequence, read N- to C-terminus: D-3-phosphoglycerate dehydrogenase (533 aa).

Alanine 2 bears the N-acetylalanine mark. Serine 14 carries the phosphoserine modification. N6-acetyllysine; alternate is present on lysine 21. Residue lysine 21 forms a Glycyl lysine isopeptide (Lys-Gly) (interchain with G-Cter in SUMO1); alternate linkage. Lysine 21 participates in a covalent cross-link: Glycyl lysine isopeptide (Lys-Gly) (interchain with G-Cter in SUMO2); alternate. Position 58 is an N6-acetyllysine (lysine 58). NAD(+) contacts are provided by residues threonine 78, 155–156 (RI), aspartate 175, threonine 207, 234–236 (CAR), and aspartate 260. Phosphothreonine is present on threonine 78. Residue arginine 236 is part of the active site. Glutamate 265 is a catalytic residue. Histidine 283 functions as the Proton donor in the catalytic mechanism. Residue 283–286 (HLGA) coordinates NAD(+).

It belongs to the D-isomer specific 2-hydroxyacid dehydrogenase family. In terms of assembly, homotetramer.

The catalysed reaction is (2R)-3-phosphoglycerate + NAD(+) = 3-phosphooxypyruvate + NADH + H(+). It carries out the reaction (R)-2-hydroxyglutarate + NAD(+) = 2-oxoglutarate + NADH + H(+). The enzyme catalyses (S)-malate + NAD(+) = oxaloacetate + NADH + H(+). It participates in amino-acid biosynthesis; L-serine biosynthesis; L-serine from 3-phospho-D-glycerate: step 1/3. Functionally, catalyzes the reversible oxidation of 3-phospho-D-glycerate to 3-phosphonooxypyruvate, the first step of the phosphorylated L-serine biosynthesis pathway. Also catalyzes the reversible oxidation of 2-hydroxyglutarate to 2-oxoglutarate and the reversible oxidation of (S)-malate to oxaloacetate. The polypeptide is D-3-phosphoglycerate dehydrogenase (PHGDH) (Pongo abelii (Sumatran orangutan)).